We begin with the raw amino-acid sequence, 227 residues long: Uracil-DNA glycosylase (227 aa).

The active-site Proton acceptor is Asp68.

This sequence belongs to the uracil-DNA glycosylase (UDG) superfamily. UNG family.

The protein resides in the cytoplasm. The enzyme catalyses Hydrolyzes single-stranded DNA or mismatched double-stranded DNA and polynucleotides, releasing free uracil.. Excises uracil residues from the DNA which can arise as a result of misincorporation of dUMP residues by DNA polymerase or due to deamination of cytosine. The polypeptide is Uracil-DNA glycosylase (Mycobacterium ulcerans (strain Agy99)).